Reading from the N-terminus, the 459-residue chain is MEHTKKFKSLNLHGFDRSTEDYGKRPFVLTAKLLEDQKKAIYGCAFNQYAGIDEEQAVATVGGSFLHMYSVPIDINNIELQWSCNFPTDKSSKVEREESLFTVTWCYDTYEAENDRNPFKVVTGGTLGHIYVIDYVSRKLSNRLRSVGWEINDIRTCPANSNLIVCASSDQSIRIHHIRNEACLIVIGGLECHAGTILSVDWSTDGDFILSCGFDHQLMEWDLSVKQVKEHLERACKALHQDKINVLTQSQDIPYVSKGTMRKSAVSRNIPDKEEDQLLELHRELIPRPSCLLPIYTPSSVSTDMHSDYVDCIRFLIGTNYALSKGCGNEKAIHFWRFGPPKGEVENRIHGNVLRPKSCTTKFRTMNVPSGSAWFIKFAVDPRRRWLVCGGAGGSVMFFDLRNNEETNPTHTCSVGSRTVRQASFSTCGRFLVLVTDEGFVCRFDRVSASVDAKDLAKF.

5 WD repeats span residues 146–186, 192–231, 305–346, 370–409, and 415–454; these read SVGW…CLIV, CHAG…VKEH, MHSD…GEVE, SGSA…ETNP, and VGSR…VDAK.

The protein belongs to the WD repeat ESC family. As to quaternary structure, interacts directly with the N-terminal domain of mes-2. Forms a heterotrimeric complex with mes-2 and mes-3. Does not interact with mes-4. In terms of tissue distribution, in adults, it is predominantly expressed in the germline, and weakly expressed in intestinal cells.

The protein localises to the nucleus. Functionally, polycomb group (PcG) protein. PcG proteins act by forming multiprotein complexes, which are required to maintain the transcriptionally repressive state of homeotic genes throughout development. In association with the nfya-1-NF-Y complex, may play a role in repressing the expression of the homeobox protein egl-5 in tissues such as the head. PcG proteins are not required to initiate repression, but to maintain it during later stages of development. The mes-2/mes-3/mes-6 complex may participate in the global inactivation of the X chromosomes in germline cells. The complex may act via methylation of histone H3 'Lys-27', rendering chromatin heritably changed in its expressibility. This complex is required to exclude mes-4 from the inactivated X-chromosomes in germline cells. Required for small-RNA-induced H3K27 trimethylation. This is Polycomb protein mes-6 from Caenorhabditis elegans.